Reading from the N-terminus, the 536-residue chain is Austinoid biosynthesis cluster protein W (536 aa).

Residues 1–19 (MKHPTVALLGVGMLGCAAA) form the signal peptide. Disordered stretches follow at residues 141–164 (GSAP…PGFP), 185–220 (SLPG…PGFS), 261–302 (FGVP…ASNG), 385–423 (PGSA…ASNG), and 491–536 (PSPT…SSAE). Residues 195–208 (SGPSQAAAAPSTGD) show a composition bias toward low complexity. Residues 209–220 (SGSGLPGSPGFS) show a composition bias toward gly residues. Low complexity-rich tracts occupy residues 287–302 (AGNA…ASNG) and 408–423 (AGNA…ASNG).

It participates in secondary metabolite biosynthesis; terpenoid biosynthesis. Functionally, part of the gene cluster that mediates the biosynthesis of calidodehydroaustin, a fungal meroterpenoid. The first step of the pathway is the synthesis of 3,5-dimethylorsellinic acid by the polyketide synthase ausA. 3,5-dimethylorsellinic acid is then prenylated by the polyprenyl transferase ausN. Further epoxidation by the FAD-dependent monooxygenase ausM and cyclization by the probable terpene cyclase ausL lead to the formation of protoaustinoid A. Protoaustinoid A is then oxidized to spiro-lactone preaustinoid A3 by the combined action of the FAD-binding monooxygenases ausB and ausC, and the dioxygenase ausE. Acid-catalyzed keto-rearrangement and ring contraction of the tetraketide portion of preaustinoid A3 by ausJ lead to the formation of preaustinoid A4. The aldo-keto reductase ausK, with the help of ausH, is involved in the next step by transforming preaustinoid A4 into isoaustinone which is in turn hydroxylated by the P450 monooxygenase ausI to form austinolide. The cytochrome P450 monooxygenase ausG modifies austinolide to austinol. Austinol is further acetylated to austin by the O-acetyltransferase ausP, which spontaneously changes to dehydroaustin. The cytochrome P450 monooxygenase ausR then converts dehydroaustin is into 7-dehydrodehydroaustin. The hydroxylation catalyzed by ausR permits the O-acetyltransferase ausQ to add an additional acetyl group to the molecule, leading to the formation of acetoxydehydroaustin. The short chain dehydrogenase ausT catalyzes the reduction of the double bond present between carbon atoms 1 and 2 to convert 7-dehydrodehydroaustin into 1,2-dihydro-7-hydroxydehydroaustin. AusQ catalyzes not only an acetylation reaction but also the addition of the PKS ausV diketide product to 1,2-dihydro-7-hydroxydehydroaustin, forming precalidodehydroaustin. Finally, the iron/alpha-ketoglutarate-dependent dioxygenase converts precalidodehydroaustin into calidodehydroaustin. The sequence is that of Austinoid biosynthesis cluster protein W from Aspergillus calidoustus.